We begin with the raw amino-acid sequence, 171 residues long: Co-chaperone protein HscB homolog (171 aa).

The 73-residue stretch at Asn-2–Glu-74 folds into the J domain.

This sequence belongs to the HscB family. In terms of assembly, interacts with HscA and stimulates its ATPase activity.

Its function is as follows. Co-chaperone involved in the maturation of iron-sulfur cluster-containing proteins. Seems to help targeting proteins to be folded toward HscA. The polypeptide is Co-chaperone protein HscB homolog (Photobacterium profundum (strain SS9)).